Reading from the N-terminus, the 642-residue chain is 1-deoxy-D-xylulose-5-phosphate synthase (642 aa).

Residues His-79 and 120-122 (GHS) contribute to the thiamine diphosphate site. Position 151 (Asp-151) interacts with Mg(2+). Thiamine diphosphate is bound by residues 152 to 153 (GS), Asn-180, Tyr-290, and Glu-372. Asn-180 is a Mg(2+) binding site.

This sequence belongs to the transketolase family. DXPS subfamily. As to quaternary structure, homodimer. Requires Mg(2+) as cofactor. Thiamine diphosphate serves as cofactor.

The catalysed reaction is D-glyceraldehyde 3-phosphate + pyruvate + H(+) = 1-deoxy-D-xylulose 5-phosphate + CO2. It functions in the pathway metabolic intermediate biosynthesis; 1-deoxy-D-xylulose 5-phosphate biosynthesis; 1-deoxy-D-xylulose 5-phosphate from D-glyceraldehyde 3-phosphate and pyruvate: step 1/1. In terms of biological role, catalyzes the acyloin condensation reaction between C atoms 2 and 3 of pyruvate and glyceraldehyde 3-phosphate to yield 1-deoxy-D-xylulose-5-phosphate (DXP). The protein is 1-deoxy-D-xylulose-5-phosphate synthase of Rhodospirillum centenum (strain ATCC 51521 / SW).